The sequence spans 914 residues: MSFVIAVPETIAAAATDLADLGSTIAGANAAAAANTTSLLAAGADEISAAIAALFGAHGRAYQAASAEAAAFHGRFVQALTTGGGAYAAAEAAAVTPLLNSINAPVLAATGRPLIGNGANGAPGTGANGGDAGWLIGNGGAGGSGAKGANGGAGGPGGAAGLFGNGGAGGAGGTATANNGIGGAGGAGGSAMLFGAGGAGGAGGAATSLVGGIGGTGGTGGNAGMLAGAAGAGGAGGFSFSTAGGAGGAGGAGGLFTTGGVGGAGGQGHTGGAGGAGGAGGLFGAGGMGGAGGFGDHGTLGTGGAGGDGGGGGLFGAGGDGGAGGSGLTTGGAAGNGGNAGTLSLGAAGGAGGTGGAGGTVFGGGKGGAGGAGGNAGMLFGSGGGGGTGGFGFAAGGQGGVGGSAGMLSGSGGSGGAGGSGGPAGTAAGGAGGAGGAPGLIGNGGNGGNGGESGGTGGVGGAGGNAVLIGNGGEGGIGALAGKSGFGGFGGLLLGADGYNAPESTSPWHNLQQDILSFINEPTEALTGRPLIGNGDSGTPGTGDDGGAGGWLFGNGGNGGAGAAGTNGSAGGAGGAGGILFGTGGAGGAGGVGTAGAGGAGGAGGSAFLIGSGGTGGVGGAATTTGGVGGAGGNAGLLIGAAGLGGCGGGAFTAGVTTGGAGGTGGAAGLFANGGAGGAGGTGSTAGGAGGAGGAGGLYAHGGTGGPGGNGGSTGAGGTGGAGGPGGLYGAGGSGGAGGHGGMAGGGGGVGGNAGSLTLNASGGAGGSGGSSLSGKAGAGGAGGSAGLFYGSGGAGGNGGYSLNGTGGDGGTGGAGQITGLRSGFGGAGGAGGASDTGAGGNGGAGGKAGLYGNGGDGGAGGDGATSGKGGAGGNAVVIGNGGNGGNAGKAGGTAGAGGAGGLVLGRDGQHGLT.

The 93-residue stretch at 1-93 folds into the PE domain; sequence MSFVIAVPET…GGAYAAAEAA (93 aa). Disordered regions lie at residues 412-431 and 895-914; these read GGSGGAGGSGGPAGTAAGGA and AGAGGAGGLVLGRDGQHGLT. The segment covering 895 to 904 has biased composition (gly residues); it reads AGAGGAGGLV.

The protein belongs to the mycobacterial PE family. PGRS subfamily.

The polypeptide is WAG22 antigen (wag22) (Mycobacterium bovis (strain ATCC BAA-935 / AF2122/97)).